A 279-amino-acid polypeptide reads, in one-letter code: Large ribosomal subunit protein uL2 (279 aa).

2 disordered regions span residues 1 to 28 (MPAR…TKEK) and 221 to 279 (RGTV…GRRR). Positions 12 to 22 (GRRNSSVLTRD) are enriched in polar residues.

This sequence belongs to the universal ribosomal protein uL2 family. As to quaternary structure, part of the 50S ribosomal subunit. Forms a bridge to the 30S subunit in the 70S ribosome.

Its function is as follows. One of the primary rRNA binding proteins. Required for association of the 30S and 50S subunits to form the 70S ribosome, for tRNA binding and peptide bond formation. It has been suggested to have peptidyltransferase activity; this is somewhat controversial. Makes several contacts with the 16S rRNA in the 70S ribosome. This chain is Large ribosomal subunit protein uL2, found in Rubrobacter xylanophilus (strain DSM 9941 / JCM 11954 / NBRC 16129 / PRD-1).